Consider the following 602-residue polypeptide: Cholinesterase (602 aa).

Positions 1-28 (MQSKGTIISIQFLLRFLLLWVLIGKSHT) are cleaved as a signal peptide. Asn-85 carries an N-linked (GlcNAc...) asparagine glycan. The cysteines at positions 93 and 120 are disulfide-linked. The N-linked (GlcNAc...) asparagine glycan is linked to Asn-134. 144-145 (GG) contributes to the substrate binding site. Ser-226 functions as the Acyl-ester intermediate in the catalytic mechanism. At Ser-226 the chain carries Phosphoserine. 2 N-linked (GlcNAc...) asparagine glycosylation sites follow: Asn-269 and Asn-284. Cys-280 and Cys-291 are disulfide-bonded. The active-site Charge relay system is the Glu-353. Asn-369 carries N-linked (GlcNAc...) asparagine glycosylation. Cysteines 428 and 547 form a disulfide. The active-site Charge relay system is His-466. Asn-483, Asn-509, Asn-513, and Asn-514 each carry an N-linked (GlcNAc...) asparagine glycan.

Belongs to the type-B carboxylesterase/lipase family. As to quaternary structure, homotetramer; disulfide-linked. Dimer of dimers.

The protein localises to the secreted. It catalyses the reaction an acylcholine + H2O = a carboxylate + choline + H(+). Its function is as follows. Esterase with broad substrate specificity. Contributes to the inactivation of the neurotransmitter acetylcholine. Can degrade neurotoxic organophosphate esters. The sequence is that of Cholinesterase (BCHE) from Felis catus (Cat).